Here is a 138-residue protein sequence, read N- to C-terminus: Acidic phospholipase A2 Tbo-E6 (138 aa).

Residues 1-16 form the signal peptide; sequence MRTLWILAVLLLGVKG. 7 disulfides stabilise this stretch: Cys-42-Cys-131, Cys-44-Cys-60, Cys-59-Cys-111, Cys-65-Cys-138, Cys-66-Cys-104, Cys-73-Cys-97, and Cys-91-Cys-102. Residues Tyr-43, Gly-45, and Gly-47 each coordinate Ca(2+). Residue His-63 is part of the active site. Asp-64 serves as a coordination point for Ca(2+). Residue Asp-105 is part of the active site.

As to quaternary structure, monomer. It depends on Ca(2+) as a cofactor. In terms of tissue distribution, expressed by the venom gland.

The protein resides in the secreted. The enzyme catalyses a 1,2-diacyl-sn-glycero-3-phosphocholine + H2O = a 1-acyl-sn-glycero-3-phosphocholine + a fatty acid + H(+). Functionally, snake venom phospholipase A2 (PLA2) that impairs hemostasis. It weakly inhibits ADP-induced platelet aggregation when tested on platelet rich plasma from human and rabbit blood (15-25% of inhibition at 5-10 ug of enzyme), and dose-dependently inhibits blood coagulation, possibly by inhibiting thrombin activation. Exhibits high hydrolytic activities toward L-dipalmitoyl phosphatidylcholine. PLA2 catalyzes the calcium-dependent hydrolysis of the 2-acyl groups in 3-sn-phosphoglycerides. The polypeptide is Acidic phospholipase A2 Tbo-E6 (Craspedocephalus borneensis (Borneo pit viper)).